The primary structure comprises 361 residues: Large ribosomal subunit protein uL3 (361 aa).

A disordered region spans residues 339–361 (RPPKKKPPVQRPQITYVSVESKQ). Residues 350–361 (PQITYVSVESKQ) are compositionally biased toward polar residues.

It belongs to the universal ribosomal protein uL3 family. In terms of assembly, part of the 50S ribosomal subunit. Forms a cluster with proteins L14 and L24e.

Its function is as follows. One of the primary rRNA binding proteins, it binds directly near the 3'-end of the 23S rRNA, where it nucleates assembly of the 50S subunit. The protein is Large ribosomal subunit protein uL3 of Pyrococcus abyssi (strain GE5 / Orsay).